The following is a 1273-amino-acid chain: DNA polymerase 037L (1273 aa).

Residues 679 to 837 (IRKNAITEEL…ENKSKEDIDE (159 aa)) adopt a coiled-coil conformation.

This sequence belongs to the DNA polymerase type-B family.

The enzyme catalyses DNA(n) + a 2'-deoxyribonucleoside 5'-triphosphate = DNA(n+1) + diphosphate. Functionally, DNA-directed DNA polymerase involved in viral DNA replication. This Invertebrate iridescent virus 6 (IIV-6) protein is DNA polymerase 037L (DPOL).